A 473-amino-acid polypeptide reads, in one-letter code: Bifunctional protein GlmU (473 aa).

The tract at residues 1 to 226 is pyrophosphorylase; it reads MRAPVAVVIL…AGEASGINDL (226 aa). Residues 10 to 13, lysine 24, glutamine 75, 80 to 81, 102 to 104, glycine 136, glutamate 151, asparagine 166, and asparagine 224 contribute to the UDP-N-acetyl-alpha-D-glucosamine site; these read LAAG, GT, and YGD. Aspartate 104 contacts Mg(2+). Residue asparagine 224 coordinates Mg(2+). Residues 227 to 247 are linker; the sequence is VQLAEVEEAFQRRWARRLLQG. The interval 248–473 is N-acetyltransferase; it reads GLRLVAPHRF…TPASGGAKEE (226 aa). Residues arginine 330 and lysine 348 each contribute to the UDP-N-acetyl-alpha-D-glucosamine site. Residue histidine 360 is the Proton acceptor of the active site. Residues tyrosine 363 and asparagine 374 each coordinate UDP-N-acetyl-alpha-D-glucosamine. Residues alanine 377, 383-384, serine 402, alanine 420, and arginine 437 contribute to the acetyl-CoA site; that span reads NY. A disordered region spans residues 439–473; sequence RARTIPGWQHPGLTGRRGPPDDNDATPASGGAKEE.

In the N-terminal section; belongs to the N-acetylglucosamine-1-phosphate uridyltransferase family. It in the C-terminal section; belongs to the transferase hexapeptide repeat family. Homotrimer. It depends on Mg(2+) as a cofactor.

The protein resides in the cytoplasm. The enzyme catalyses alpha-D-glucosamine 1-phosphate + acetyl-CoA = N-acetyl-alpha-D-glucosamine 1-phosphate + CoA + H(+). The catalysed reaction is N-acetyl-alpha-D-glucosamine 1-phosphate + UTP + H(+) = UDP-N-acetyl-alpha-D-glucosamine + diphosphate. The protein operates within nucleotide-sugar biosynthesis; UDP-N-acetyl-alpha-D-glucosamine biosynthesis; N-acetyl-alpha-D-glucosamine 1-phosphate from alpha-D-glucosamine 6-phosphate (route II): step 2/2. Its pathway is nucleotide-sugar biosynthesis; UDP-N-acetyl-alpha-D-glucosamine biosynthesis; UDP-N-acetyl-alpha-D-glucosamine from N-acetyl-alpha-D-glucosamine 1-phosphate: step 1/1. It functions in the pathway bacterial outer membrane biogenesis; LPS lipid A biosynthesis. In terms of biological role, catalyzes the last two sequential reactions in the de novo biosynthetic pathway for UDP-N-acetylglucosamine (UDP-GlcNAc). The C-terminal domain catalyzes the transfer of acetyl group from acetyl coenzyme A to glucosamine-1-phosphate (GlcN-1-P) to produce N-acetylglucosamine-1-phosphate (GlcNAc-1-P), which is converted into UDP-GlcNAc by the transfer of uridine 5-monophosphate (from uridine 5-triphosphate), a reaction catalyzed by the N-terminal domain. The protein is Bifunctional protein GlmU of Halorhodospira halophila (strain DSM 244 / SL1) (Ectothiorhodospira halophila (strain DSM 244 / SL1)).